A 717-amino-acid chain; its full sequence is ATP-dependent RNA helicase homolog DQX1 (717 aa).

The Helicase ATP-binding domain occupies 57–225 (QLESNPTGVV…WGNPPIVHIP (169 aa)). Residue 70–77 (GEPGSGKS) participates in ATP binding. Positions 170 to 173 (DEAQ) match the DEAQ box motif. Residues 248-447 (ACQAVLELCR…ALMQALEDLD (200 aa)) form the Helicase C-terminal domain. The interval 694-717 (GMADSTAGSKSSSAQEFRDPCVLQ) is disordered. The segment covering 699-708 (TAGSKSSSAQ) has biased composition (polar residues).

Its subcellular location is the nucleus. Functionally, might be involved in RNA metabolism; it is missing helicase motif III and may not have helicase activity. This Homo sapiens (Human) protein is ATP-dependent RNA helicase homolog DQX1 (DQX1).